Reading from the N-terminus, the 471-residue chain is Lincomycin resistance protein LmrB (471 aa).

The next 13 membrane-spanning stretches (helical) occupy residues 15–34 (PIIA…ETAL), 55–77 (LTTG…LQWF), 82–104 (LFFT…PTFA), 111–131 (VVQA…ILLI), 141–163 (MGMI…GLIL), 170–187 (WIFW…LFGM), 202–224 (DILS…SSAG), 231–253 (ATVL…RQLT), 268–290 (MFTL…MILL), 297–319 (SLAL…NGLM), 329–351 (AYGP…FFLT), 358–380 (SALT…MMPA), and 445–467 (GIQN…SLFI).

This sequence belongs to the major facilitator superfamily. EmrB family.

The protein resides in the cell membrane. Proton-dependent transporter. May mediate the efflux of lincomycin. In Listeria innocua serovar 6a (strain ATCC BAA-680 / CLIP 11262), this protein is Lincomycin resistance protein LmrB (lmrB).